The sequence spans 258 residues: NAD kinase (258 aa).

The active-site Proton acceptor is the aspartate 45. NAD(+) contacts are provided by residues 45-46, 117-118, aspartate 147, alanine 155, 158-163, and alanine 182; these read DG, NE, and TAYNYS.

This sequence belongs to the NAD kinase family. It depends on a divalent metal cation as a cofactor.

The protein resides in the cytoplasm. It carries out the reaction NAD(+) + ATP = ADP + NADP(+) + H(+). Involved in the regulation of the intracellular balance of NAD and NADP, and is a key enzyme in the biosynthesis of NADP. Catalyzes specifically the phosphorylation on 2'-hydroxyl of the adenosine moiety of NAD to yield NADP. The protein is NAD kinase of Xanthomonas campestris pv. campestris (strain 8004).